The following is a 157-amino-acid chain: Holo-[acyl-carrier-protein] synthase (157 aa).

Residues Asp8 and Glu59 each coordinate Mg(2+).

The protein belongs to the P-Pant transferase superfamily. AcpS family. Mg(2+) serves as cofactor.

It localises to the cytoplasm. The enzyme catalyses apo-[ACP] + CoA = holo-[ACP] + adenosine 3',5'-bisphosphate + H(+). Its function is as follows. Transfers the 4'-phosphopantetheine moiety from coenzyme A to a Ser of acyl-carrier-protein. The sequence is that of Holo-[acyl-carrier-protein] synthase from Gluconobacter oxydans (strain 621H) (Gluconobacter suboxydans).